A 236-amino-acid polypeptide reads, in one-letter code: Ubiquinone biosynthesis O-methyltransferase (236 aa).

Residues Arg-39, Gly-59, Asp-80, and Met-124 each coordinate S-adenosyl-L-methionine.

It belongs to the methyltransferase superfamily. UbiG/COQ3 family.

It catalyses the reaction a 3-demethylubiquinol + S-adenosyl-L-methionine = a ubiquinol + S-adenosyl-L-homocysteine + H(+). The enzyme catalyses a 3-(all-trans-polyprenyl)benzene-1,2-diol + S-adenosyl-L-methionine = a 2-methoxy-6-(all-trans-polyprenyl)phenol + S-adenosyl-L-homocysteine + H(+). The protein operates within cofactor biosynthesis; ubiquinone biosynthesis. In terms of biological role, O-methyltransferase that catalyzes the 2 O-methylation steps in the ubiquinone biosynthetic pathway. This Shewanella halifaxensis (strain HAW-EB4) protein is Ubiquinone biosynthesis O-methyltransferase.